The chain runs to 286 residues: Polyamine aminopropyltransferase (286 aa).

The region spanning 5-238 is the PABS domain; it reads TMWHETLHDQ…GIMTFAWATD (234 aa). Residue glutamine 33 coordinates S-methyl-5'-thioadenosine. Residues histidine 64 and aspartate 88 each contribute to the spermidine site. S-methyl-5'-thioadenosine-binding positions include glutamate 108 and 140–141; that span reads DG. The Proton acceptor role is filled by aspartate 158. 158 to 161 provides a ligand contact to spermidine; the sequence is DCTD. Proline 165 provides a ligand contact to S-methyl-5'-thioadenosine.

It belongs to the spermidine/spermine synthase family. Homodimer or homotetramer.

The protein resides in the cytoplasm. The enzyme catalyses S-adenosyl 3-(methylsulfanyl)propylamine + putrescine = S-methyl-5'-thioadenosine + spermidine + H(+). The protein operates within amine and polyamine biosynthesis; spermidine biosynthesis; spermidine from putrescine: step 1/1. Catalyzes the irreversible transfer of a propylamine group from the amino donor S-adenosylmethioninamine (decarboxy-AdoMet) to putrescine (1,4-diaminobutane) to yield spermidine. This Salmonella arizonae (strain ATCC BAA-731 / CDC346-86 / RSK2980) protein is Polyamine aminopropyltransferase.